Consider the following 446-residue polypeptide: Methionine aminopeptidase 2 (446 aa).

A disordered region spans residues Met1 to Phe91. Residues Glu36–Val48 are compositionally biased toward acidic residues. Residues Lys59 to Ala72 are compositionally biased toward basic residues. Residue His199 coordinates substrate. Positions 219, 230, and 299 each coordinate a divalent metal cation. Residue His307 participates in substrate binding. Residues Glu332 and Glu427 each coordinate a divalent metal cation.

Belongs to the peptidase M24A family. Methionine aminopeptidase eukaryotic type 2 subfamily. Co(2+) is required as a cofactor. It depends on Zn(2+) as a cofactor. Requires Mn(2+) as cofactor. Fe(2+) serves as cofactor.

The protein resides in the cytoplasm. It catalyses the reaction Release of N-terminal amino acids, preferentially methionine, from peptides and arylamides.. Its function is as follows. Cotranslationally removes the N-terminal methionine from nascent proteins. The N-terminal methionine is often cleaved when the second residue in the primary sequence is small and uncharged (Met-Ala-, Cys, Gly, Pro, Ser, Thr, or Val). The sequence is that of Methionine aminopeptidase 2 from Sclerotinia sclerotiorum (strain ATCC 18683 / 1980 / Ss-1) (White mold).